The chain runs to 100 residues: NADH-quinone oxidoreductase subunit K (100 aa).

Helical transmembrane passes span 4–24, 29–49, and 60–80; these read LSYS…GIMI, LFLL…FVIV, and VMYI…LALL.

Belongs to the complex I subunit 4L family. NDH-1 is composed of 14 different subunits. Subunits NuoA, H, J, K, L, M, N constitute the membrane sector of the complex.

It localises to the cell membrane. It catalyses the reaction a quinone + NADH + 5 H(+)(in) = a quinol + NAD(+) + 4 H(+)(out). Functionally, NDH-1 shuttles electrons from NADH, via FMN and iron-sulfur (Fe-S) centers, to quinones in the respiratory chain. The immediate electron acceptor for the enzyme in this species is believed to be ubiquinone. Couples the redox reaction to proton translocation (for every two electrons transferred, four hydrogen ions are translocated across the cytoplasmic membrane), and thus conserves the redox energy in a proton gradient. This Baumannia cicadellinicola subsp. Homalodisca coagulata protein is NADH-quinone oxidoreductase subunit K.